A 124-amino-acid chain; its full sequence is UPF0102 protein Haur_0145 (124 aa).

The protein belongs to the UPF0102 family.

The polypeptide is UPF0102 protein Haur_0145 (Herpetosiphon aurantiacus (strain ATCC 23779 / DSM 785 / 114-95)).